Here is a 424-residue protein sequence, read N- to C-terminus: Glutamate-1-semialdehyde 2,1-aminomutase (424 aa).

Lys266 is modified (N6-(pyridoxal phosphate)lysine).

This sequence belongs to the class-III pyridoxal-phosphate-dependent aminotransferase family. HemL subfamily. As to quaternary structure, homodimer. Pyridoxal 5'-phosphate is required as a cofactor.

It is found in the cytoplasm. The catalysed reaction is (S)-4-amino-5-oxopentanoate = 5-aminolevulinate. The protein operates within porphyrin-containing compound metabolism; protoporphyrin-IX biosynthesis; 5-aminolevulinate from L-glutamyl-tRNA(Glu): step 2/2. This chain is Glutamate-1-semialdehyde 2,1-aminomutase, found in Thermus thermophilus (strain ATCC 27634 / DSM 579 / HB8).